The primary structure comprises 250 residues: Aquaporin SIP2-1 (250 aa).

The next 2 membrane-spanning stretches (helical) occupy residues 14 to 34 (PWLVVGDLVVAAMWVCAGALV) and 55 to 75 (VALSLVYMFFFAWLEGFTGGA). The NPA 1 motif lies at 78 to 80 (NPL). 4 helical membrane passes run 95-115 (LYLFAAFVRMPAQVFGSILGV), 132-152 (SVGVHHGALAEGLATFMVVIV), 178-200 (FHLLSSDITGGVMNPASAFAWAY), and 211-231 (LLVYWLAPLQATLLGVWVVTL). Positions 191 to 193 (NPA) match the NPA 2 motif.

Belongs to the MIP/aquaporin (TC 1.A.8) family. SIP (TC 1.A.8.10) subfamily. In terms of tissue distribution, expressed in leaves and anthers, and at lower levels in roots.

Its subcellular location is the membrane. In terms of biological role, aquaporins facilitate the transport of water and small neutral solutes across cell membranes. This is Aquaporin SIP2-1 (SIP2-1) from Oryza sativa subsp. japonica (Rice).